The primary structure comprises 101 residues: Small ribosomal subunit protein uS14 (101 aa).

The protein belongs to the universal ribosomal protein uS14 family. In terms of assembly, part of the 30S ribosomal subunit. Contacts proteins S3 and S10.

Binds 16S rRNA, required for the assembly of 30S particles and may also be responsible for determining the conformation of the 16S rRNA at the A site. This Chlamydia pneumoniae (Chlamydophila pneumoniae) protein is Small ribosomal subunit protein uS14.